We begin with the raw amino-acid sequence, 147 residues long: Endoribonuclease YbeY (147 aa).

Residues His-108, His-112, and His-118 each contribute to the Zn(2+) site.

It belongs to the endoribonuclease YbeY family. Requires Zn(2+) as cofactor.

Its subcellular location is the cytoplasm. Functionally, single strand-specific metallo-endoribonuclease involved in late-stage 70S ribosome quality control and in maturation of the 3' terminus of the 16S rRNA. The sequence is that of Endoribonuclease YbeY from Sulfurovum sp. (strain NBC37-1).